The chain runs to 396 residues: Acetate kinase (396 aa).

Mg(2+) is bound at residue Asn-8. Lys-15 serves as a coordination point for ATP. Arg-89 is a substrate binding site. Catalysis depends on Asp-146, which acts as the Proton donor/acceptor. ATP is bound by residues 206–210 (HIGNG), 283–285 (DMR), and 331–335 (GVGEN). Residue Glu-383 participates in Mg(2+) binding.

Belongs to the acetokinase family. In terms of assembly, homodimer. Mg(2+) serves as cofactor. The cofactor is Mn(2+).

The protein localises to the cytoplasm. It carries out the reaction acetate + ATP = acetyl phosphate + ADP. The protein operates within metabolic intermediate biosynthesis; acetyl-CoA biosynthesis; acetyl-CoA from acetate: step 1/2. Catalyzes the formation of acetyl phosphate from acetate and ATP. Can also catalyze the reverse reaction. In Streptococcus pneumoniae (strain Hungary19A-6), this protein is Acetate kinase.